Consider the following 406-residue polypeptide: Argininosuccinate synthase (406 aa).

ATP contacts are provided by residues 12–20 and Ala-39; that span reads AYSGGLDTS. Tyr-90 and Ser-95 together coordinate L-citrulline. Gly-120 lines the ATP pocket. L-aspartate is bound by residues Thr-122, Asn-126, and Asp-127. Asn-126 provides a ligand contact to L-citrulline. L-citrulline-binding residues include Arg-130, Ser-179, Ser-188, Glu-264, and Tyr-276.

This sequence belongs to the argininosuccinate synthase family. Type 1 subfamily. In terms of assembly, homotetramer.

The protein resides in the cytoplasm. The enzyme catalyses L-citrulline + L-aspartate + ATP = 2-(N(omega)-L-arginino)succinate + AMP + diphosphate + H(+). The protein operates within amino-acid biosynthesis; L-arginine biosynthesis; L-arginine from L-ornithine and carbamoyl phosphate: step 2/3. The protein is Argininosuccinate synthase of Geotalea daltonii (strain DSM 22248 / JCM 15807 / FRC-32) (Geobacter daltonii).